The following is a 170-amino-acid chain: ATP synthase subunit b, chloroplastic (170 aa).

Residues Ile-15–Gly-35 form a helical membrane-spanning segment.

Belongs to the ATPase B chain family. F-type ATPases have 2 components, F(1) - the catalytic core - and F(0) - the membrane proton channel. F(1) has five subunits: alpha(3), beta(3), gamma(1), delta(1), epsilon(1). F(0) has four main subunits: a(1), b(1), b'(1) and c(10-14). The alpha and beta chains form an alternating ring which encloses part of the gamma chain. F(1) is attached to F(0) by a central stalk formed by the gamma and epsilon chains, while a peripheral stalk is formed by the delta, b and b' chains.

It is found in the plastid. The protein resides in the chloroplast thylakoid membrane. Functionally, f(1)F(0) ATP synthase produces ATP from ADP in the presence of a proton or sodium gradient. F-type ATPases consist of two structural domains, F(1) containing the extramembraneous catalytic core and F(0) containing the membrane proton channel, linked together by a central stalk and a peripheral stalk. During catalysis, ATP synthesis in the catalytic domain of F(1) is coupled via a rotary mechanism of the central stalk subunits to proton translocation. Its function is as follows. Component of the F(0) channel, it forms part of the peripheral stalk, linking F(1) to F(0). The polypeptide is ATP synthase subunit b, chloroplastic (Stigeoclonium helveticum (Green alga)).